A 507-amino-acid chain; its full sequence is Maturase K (507 aa).

It belongs to the intron maturase 2 family. MatK subfamily.

It is found in the plastid. The protein localises to the chloroplast. Functionally, usually encoded in the trnK tRNA gene intron. Probably assists in splicing its own and other chloroplast group II introns. The protein is Maturase K of Annona muricata (Soursop).